A 100-amino-acid polypeptide reads, in one-letter code: Large ribosomal subunit protein eL30 (100 aa).

Belongs to the eukaryotic ribosomal protein eL30 family.

The chain is Large ribosomal subunit protein eL30 from Methanococcus maripaludis (strain DSM 14266 / JCM 13030 / NBRC 101832 / S2 / LL).